We begin with the raw amino-acid sequence, 916 residues long: MLWARGRQPDHRIRMSQQTTIRKLAELVNTPVDKLLVQLAEAGMKFSGPDQVVTSTEKMKLLGFLRRTHGKADTPAEAASEAAKKITLNRRKLQEVTVNAGRTKTTVNVEVRQKRTYVKSENEGSGRAAPMTPDEERADILAKLAASRQRNLDEQQRLAESDRARDEAIQRKRDEEQAAKDRVEAERKAAEEAAAAASAPAPVAAAPAPSSAPAARAPSSPSSAPRPARPAGASPASRPATPARPDDRNNAAKHKTRGSHVMVAGVEDDDATKRFAGQLHLSAADRARRSNVRGKPTGRPGSSSSRRNDGGRGSNQSNSGPHGFERPTAPVVREVAIGETITVADLAQKLALKGGDVVKALFKMGVMATITQSIDHDTAALVTEELGHKAVRADNADFEDALLAHAEDAQGETTSRPPVVTIMGHVDHGKTSLLDYIRRTKIASGEAGGITQHIGAYHVETGRGVISFLDTPGHAAFTSMRARGAKITDIVVLVVAADDGVMPQTKEAVAHAKAAGVPLIVAVNKIDKAGADPLRVKNELLAENVVAEDFGGDTQFIEVSAKVGTGVDTLLDAISLQAEVLELKAVADGRASGTVIESSLDKGRGPVATVLVQQGALKRGDYLVCGIQYGRVRALFDETGHQPASAGPSIPVQVLGLSGVPEAGDDFVVVDDERLAKDVAQQRETKRRESRLVASATNRMEDILAQMGKGEGQQVLNLVIKADVQGSVEALKQSLVALSNDDIRINVIHSGVGGITESDANSAAASKATIIGFNVRADASARKIVESNGIDLRYFSIIYDVIDQVKQVASGLLGVEIREEIIGIAQVRDVFRSSKFGAVAGCMIIEGVVKRSKPIRVLRDSVVVFEGELESLRRFKENVDEVRNGTECGIGVKAYNDVKAGDQIECFERIEVARTL.

The segment covering 151–191 (NLDEQQRLAESDRARDEAIQRKRDEEQAAKDRVEAERKAAE) has biased composition (basic and acidic residues). 2 disordered regions span residues 151–262 (NLDE…SHVM) and 280–328 (HLSA…ERPT). Composition is skewed to low complexity over residues 192–243 (EAAA…ATPA) and 293–305 (RGKPTGRPGSSSS). The 170-residue stretch at 415 to 584 (SRPPVVTIMG…SLQAEVLELK (170 aa)) folds into the tr-type G domain. Residues 424–431 (GHVDHGKT) form a G1 region. 424-431 (GHVDHGKT) serves as a coordination point for GTP. Positions 449 to 453 (GITQH) are G2. The G3 stretch occupies residues 470–473 (DTPG). GTP-binding positions include 470-474 (DTPGH) and 524-527 (NKID). The interval 524–527 (NKID) is G4. Residues 560 to 562 (SAK) are G5.

Belongs to the TRAFAC class translation factor GTPase superfamily. Classic translation factor GTPase family. IF-2 subfamily.

The protein resides in the cytoplasm. One of the essential components for the initiation of protein synthesis. Protects formylmethionyl-tRNA from spontaneous hydrolysis and promotes its binding to the 30S ribosomal subunits. Also involved in the hydrolysis of GTP during the formation of the 70S ribosomal complex. In Xanthomonas campestris pv. campestris (strain ATCC 33913 / DSM 3586 / NCPPB 528 / LMG 568 / P 25), this protein is Translation initiation factor IF-2.